A 182-amino-acid chain; its full sequence is MLISHSDLNQQLKSAGIGFNATELHGFLSGLLCGGLKDQSWLPLLYQFSNDNHAYPTALVQPVTELYEKISQTLSDVEGFTFGLGLTEDENVFAQADSLSDWANQFLLGLGLAQPELAKEKGEIGEAVDDLQDICQLGYNEDDNEEELAEALEEIIEYVRTIAMLFYSHFNEGEIESKPVLH.

Belongs to the UPF0149 family.

The sequence is that of UPF0149 protein CGSHiEE_07975 from Haemophilus influenzae (strain PittEE).